The sequence spans 201 residues: Pyridoxine/pyridoxamine 5'-phosphate oxidase (201 aa).

FMN contacts are provided by residues 49–54 (RMVLLK), 64–65 (YT), K71, and Q93. K54 contributes to the substrate binding site. Substrate-binding residues include Y111, R115, and S119. FMN-binding positions include 128–129 (QS) and W172. Residue 178–180 (RLH) coordinates substrate. R182 contributes to the FMN binding site.

This sequence belongs to the pyridoxamine 5'-phosphate oxidase family. In terms of assembly, homodimer. The cofactor is FMN.

It carries out the reaction pyridoxamine 5'-phosphate + O2 + H2O = pyridoxal 5'-phosphate + H2O2 + NH4(+). The catalysed reaction is pyridoxine 5'-phosphate + O2 = pyridoxal 5'-phosphate + H2O2. Its pathway is cofactor metabolism; pyridoxal 5'-phosphate salvage; pyridoxal 5'-phosphate from pyridoxamine 5'-phosphate: step 1/1. The protein operates within cofactor metabolism; pyridoxal 5'-phosphate salvage; pyridoxal 5'-phosphate from pyridoxine 5'-phosphate: step 1/1. Catalyzes the oxidation of either pyridoxine 5'-phosphate (PNP) or pyridoxamine 5'-phosphate (PMP) into pyridoxal 5'-phosphate (PLP). This Ruegeria sp. (strain TM1040) (Silicibacter sp.) protein is Pyridoxine/pyridoxamine 5'-phosphate oxidase.